Consider the following 396-residue polypeptide: S-adenosylmethionine synthase (396 aa).

Residue His16 coordinates ATP. Asp18 lines the Mg(2+) pocket. Glu44 contacts K(+). Residues Glu57 and Gln100 each contribute to the L-methionine site. A flexible loop region spans residues 100–110 (QSPDINQGVDR). ATP contacts are provided by residues 165–167 (DAK), Asp240, 246–247 (RK), Ala263, and Lys267. L-methionine is bound at residue Asp240. Residue Lys271 coordinates L-methionine.

Belongs to the AdoMet synthase family. Homotetramer; dimer of dimers. Requires Mg(2+) as cofactor. K(+) serves as cofactor.

The protein resides in the cytoplasm. It carries out the reaction L-methionine + ATP + H2O = S-adenosyl-L-methionine + phosphate + diphosphate. It functions in the pathway amino-acid biosynthesis; S-adenosyl-L-methionine biosynthesis; S-adenosyl-L-methionine from L-methionine: step 1/1. Catalyzes the formation of S-adenosylmethionine (AdoMet) from methionine and ATP. The overall synthetic reaction is composed of two sequential steps, AdoMet formation and the subsequent tripolyphosphate hydrolysis which occurs prior to release of AdoMet from the enzyme. The chain is S-adenosylmethionine synthase from Pseudomonas fluorescens (strain ATCC BAA-477 / NRRL B-23932 / Pf-5).